Consider the following 482-residue polypeptide: tRNA sulfurtransferase (482 aa).

One can recognise a THUMP domain in the interval 61–165 (LAIRDALTRI…DDRLLLIKGR (105 aa)). ATP-binding positions include 183-184 (LI), lysine 265, glycine 287, and glutamine 296. Cysteines 344 and 456 form a disulfide. Residues 404–482 (FGPNDVILDI…GFNNVKVYRP (79 aa)) form the Rhodanese domain. Cysteine 456 serves as the catalytic Cysteine persulfide intermediate.

Belongs to the ThiI family.

The protein localises to the cytoplasm. It catalyses the reaction [ThiI sulfur-carrier protein]-S-sulfanyl-L-cysteine + a uridine in tRNA + 2 reduced [2Fe-2S]-[ferredoxin] + ATP + H(+) = [ThiI sulfur-carrier protein]-L-cysteine + a 4-thiouridine in tRNA + 2 oxidized [2Fe-2S]-[ferredoxin] + AMP + diphosphate. The catalysed reaction is [ThiS sulfur-carrier protein]-C-terminal Gly-Gly-AMP + S-sulfanyl-L-cysteinyl-[cysteine desulfurase] + AH2 = [ThiS sulfur-carrier protein]-C-terminal-Gly-aminoethanethioate + L-cysteinyl-[cysteine desulfurase] + A + AMP + 2 H(+). It participates in cofactor biosynthesis; thiamine diphosphate biosynthesis. In terms of biological role, catalyzes the ATP-dependent transfer of a sulfur to tRNA to produce 4-thiouridine in position 8 of tRNAs, which functions as a near-UV photosensor. Also catalyzes the transfer of sulfur to the sulfur carrier protein ThiS, forming ThiS-thiocarboxylate. This is a step in the synthesis of thiazole, in the thiamine biosynthesis pathway. The sulfur is donated as persulfide by IscS. The sequence is that of tRNA sulfurtransferase from Escherichia coli O139:H28 (strain E24377A / ETEC).